We begin with the raw amino-acid sequence, 436 residues long: DNA-dependent metalloprotease SPRTN (436 aa).

Residues 19–186 (IRALFLEFND…RTCGGEFVKI (168 aa)) form the SprT-like domain. His-85 is a Zn(2+) binding site. The active site involves Glu-86. 2 residues coordinate Zn(2+): His-89 and His-104. The segment at 184–219 (VKIKEPENYSQKRKRNNDPTKSELGNSSHVKINKGK) is disordered. Positions 231 to 239 (FSGTGYKLF) match the SHP-box motif. A PIP-box motif is present at residues 271–277 (QTDSTFL). Positions 300 to 321 (GSPIKLPSSSNNKSHQDSSKQK) are disordered. The UBZ4-type zinc-finger motif lies at 408-435 (KVCCPVCGTEIFESKINDHLDTCLQNYN). Residues Cys-411, Cys-414, His-426, and Cys-430 each contribute to the Zn(2+) site.

This sequence belongs to the Spartan family. Homodimer. Zn(2+) serves as cofactor. In terms of processing, autocatalytically cleaved in response to double-stranded DNA-binding: autocatalytic cleavage takes place in trans and leads to inactivation.

It is found in the nucleus. Its subcellular location is the chromosome. Its activity is regulated as follows. DNA-binding activates the protease activity: single-stranded DNA-binding specifically activates ability to cleave covalent DNA-protein cross-links (DPCs). In contrast, double-stranded DNA-binding specifically activates autocatalytic cleavage, and subsequent inactivation. In terms of biological role, DNA-dependent metalloendopeptidase that mediates the proteolytic cleavage of covalent DNA-protein cross-links (DPCs) during DNA synthesis, thereby playing a key role in maintaining genomic integrity. DPCs are highly toxic DNA lesions that interfere with essential chromatin transactions, such as replication and transcription, and which are induced by reactive agents, such as UV light or formaldehyde. Associates with the DNA replication machinery and specifically removes DPCs during DNA synthesis. Catalyzes proteolytic cleavage of the hmces DNA-protein cross-link following unfolding by the brip1/fancj helicase. Acts as a pleiotropic protease for DNA-binding proteins cross-linked with DNA, such as top1, top2a, histones H3 and H4. Mediates degradation of DPCs that are not ubiquitinated, while it is not able to degrade ubiquitinated DPCs. SPRTN activation requires polymerase collision with DPCs followed by helicase bypass of DPCs. May also act as a 'reader' of ubiquitinated pcna: facilitates chromatin association of rad18 and is required for efficient pcna monoubiquitination, promoting a feed-forward loop to enhance pcna ubiquitination and translesion DNA synthesis. Acts as a regulator of translesion DNA synthesis by recruiting vcp/p97 to sites of DNA damage. In Xenopus tropicalis (Western clawed frog), this protein is DNA-dependent metalloprotease SPRTN.